A 168-amino-acid polypeptide reads, in one-letter code: MAPSLSPIRSHHVAVIGAGAAGLVAARELRREGHSVVVFERQKQVGGTWIYTDHIEPDPLSVDPTRSVVHSSVYGSLRTNLPRECMGYRDFPFVVRSGVSESRDPRRFPSHGEVLAYLQDFAKEFAIEEMIRFDTAVVKVAPAAEEGSGKWRIESTEKEKKKWAHRAV.

An FAD-binding site is contributed by 17–22 (GAGAAG).

The protein belongs to the FMO family. FAD serves as cofactor.

In terms of biological role, catalyzes the conversion of methylthioalkyl glucosinolates of any chain length into methylsulfinylalkyl glucosinolates. This chain is Putative flavin-containing monooxygenase FMO GS-OX-like 11, found in Arabidopsis thaliana (Mouse-ear cress).